We begin with the raw amino-acid sequence, 27 residues long: Antimicrobial peptide 1 (27 aa).

As to expression, expressed by the skin glands.

The protein localises to the secreted. Has very weak antimicrobial activity against Gram-positive bacterium S.aureus and Gram-negative bacterium E.coli and stronger activity against yeast C.albicans. Enhances the antibacterial activity of XT3. Has hemolytic activity against human red blood cells. This chain is Antimicrobial peptide 1, found in Xenopus tropicalis (Western clawed frog).